A 217-amino-acid polypeptide reads, in one-letter code: UPF0319 protein HS_1349 (217 aa).

The signal sequence occupies residues 1–21; it reads MKFSFAALASAMLLTSTAAFA.

This sequence belongs to the UPF0319 family.

The chain is UPF0319 protein HS_1349 from Histophilus somni (strain 129Pt) (Haemophilus somnus).